Consider the following 214-residue polypeptide: Large ribosomal subunit protein uL3 (214 aa).

The segment at 131 to 153 is disordered; the sequence is KSQRASHGNSRSHNVPGSIGMAQ. Residues 132-145 show a composition bias toward polar residues; that stretch reads SQRASHGNSRSHNV. N5-methylglutamine is present on Gln-153.

Belongs to the universal ribosomal protein uL3 family. As to quaternary structure, part of the 50S ribosomal subunit. Forms a cluster with proteins L14 and L19. Methylated by PrmB.

One of the primary rRNA binding proteins, it binds directly near the 3'-end of the 23S rRNA, where it nucleates assembly of the 50S subunit. This is Large ribosomal subunit protein uL3 from Thiobacillus denitrificans (strain ATCC 25259 / T1).